We begin with the raw amino-acid sequence, 549 residues long: Probable protein kinase UbiB (549 aa).

The 379-residue stretch at 123 to 501 (DFDETPLASA…QQQAHKSNYM (379 aa)) folds into the Protein kinase domain. ATP contacts are provided by residues 129-137 (LASASISQV) and Lys-152. The Proton acceptor role is filled by Asp-287. A run of 2 helical transmembrane segments spans residues 499-516 (NYMLITSAVLLICGTLLF) and 521-540 (TLWSPYVCLTSGVLMWFIGW).

It belongs to the ABC1 family. UbiB subfamily.

The protein localises to the cell inner membrane. Its pathway is cofactor biosynthesis; ubiquinone biosynthesis [regulation]. Its function is as follows. Is probably a protein kinase regulator of UbiI activity which is involved in aerobic coenzyme Q (ubiquinone) biosynthesis. This Shewanella sp. (strain W3-18-1) protein is Probable protein kinase UbiB.